The chain runs to 217 residues: Zinc finger CCHC-type and RNA-binding motif-containing protein 1 (217 aa).

The RRM domain maps to 10 to 88; the sequence is STVYVSNLPF…RVIKASIAID (79 aa). The segment at 105 to 122 adopts a CCHC-type zinc-finger fold; that stretch reads SKCYECGESGHLSYACPK. The segment at 120 to 217 is disordered; that stretch reads CPKNMLGERE…YFSDEEELSD (98 aa). The span at 145–163 shows a compositional bias: acidic residues; sequence PEEEIEEVEESEDEGEDPA. Ser155, Ser210, and Ser216 each carry phosphoserine.

As to quaternary structure, component of the U11/U12 snRNPs that are part of the U12-type spliceosome.

The protein localises to the nucleus. It is found in the nucleoplasm. This chain is Zinc finger CCHC-type and RNA-binding motif-containing protein 1 (ZCRB1), found in Homo sapiens (Human).